Reading from the N-terminus, the 631-residue chain is Chaperone protein HtpG (631 aa).

Residues 1–339 (MSAQKETLGF…SNDLPLNVSR (339 aa)) are a; substrate-binding. A b region spans residues 340–556 (EILQESKDID…EHDMSAHLER (217 aa)). Residues 557 to 631 (MLKAAGQKIE…INKLMLELSV (75 aa)) form a c region.

This sequence belongs to the heat shock protein 90 family. As to quaternary structure, homodimer.

The protein localises to the cytoplasm. Molecular chaperone. Has ATPase activity. The chain is Chaperone protein HtpG from Chromobacterium violaceum (strain ATCC 12472 / DSM 30191 / JCM 1249 / CCUG 213 / NBRC 12614 / NCIMB 9131 / NCTC 9757 / MK).